Consider the following 305-residue polypeptide: Tetraspanin-12 (305 aa).

Residues 1–12 (MAREDSVKCLRC) lie on the Cytoplasmic side of the membrane. Residues Cys-9 and Cys-12 are each lipidated (S-palmitoyl cysteine). The helical transmembrane segment at 13–33 (LLYALNLLFWLMSISVLAVSA) threads the bilayer. At 34–59 (WMRDYLNNVLTLTAETRVEEAVILTY) the chain is on the extracellular side. The chain crosses the membrane as a helical span at residues 60-80 (FPVVHPVMIAVCCFLIIVGML). The Cytoplasmic segment spans residues 81 to 89 (GYCGTVKRN). Cys-83 carries the S-palmitoyl cysteine lipid modification. A helical membrane pass occupies residues 90–110 (LLLLAWYFGTLLVIFCVELAC). Residues 111 to 224 (GVWTYEQEVM…RGTKQLQVLR (114 aa)) are Extracellular-facing. The helical transmembrane segment at 225-245 (FLGISIGVTQILAMILTITLL) threads the bilayer. Over 246–305 (WALYYDRREPGTDQMLSLKNDTSQHLSCHSVELLKPSLSRIFEHTSMANSFNTHFEMEEL) the chain is Cytoplasmic.

Belongs to the tetraspanin (TM4SF) family. As to quaternary structure, interacts (when palmitoylated) with ADAM10. Interacts with MMP14/MT1-MMP. Component of a complex, at least composed of TSPAN12, FZD4 and norrin (NDP). In terms of processing, palmitoylated; required for interaction with ADAM10. In terms of tissue distribution, expressed in the neonatal retinal vasculature but not other retinal tissues. Also detected in the neonatal meningeal vasculature and in nonvascular cell types, such as the smooth muscle cells in the neonatal intestine.

The protein resides in the cell membrane. Functionally, regulator of cell surface receptor signal transduction. Acts as a regulator of membrane proteinases such as ADAM10 and MMP14/MT1-MMP. Activates ADAM10-dependent cleavage activity of amyloid precursor protein (APP). Activates MMP14/MT1-MMP-dependent cleavage activity. Plays a central role in retinal vascularization by regulating norrin (NDP) signal transduction. Acts in concert with norrin (NDP) to promote FZD4 multimerization and subsequent activation of FZD4, leading to promote accumulation of beta-catenin (CTNNB1) and stimulate LEF/TCF-mediated transcriptional programs. Suprisingly, it only activate the norrin (NDP)-dependent activation of FZD4, while it does not activate the Wnt-dependent activation of FZD4, suggesting the existence of a Wnt-independent signaling that also promote accumulation the beta-catenin (CTNNB1). The sequence is that of Tetraspanin-12 (Tspan12) from Mus musculus (Mouse).